A 121-amino-acid polypeptide reads, in one-letter code: Large ribosomal subunit protein uL14 (121 aa).

The protein belongs to the universal ribosomal protein uL14 family. In terms of assembly, part of the 50S ribosomal subunit. Forms a cluster with proteins L3 and L19. In the 70S ribosome, L14 and L19 interact and together make contacts with the 16S rRNA in bridges B5 and B8.

Its function is as follows. Binds to 23S rRNA. Forms part of two intersubunit bridges in the 70S ribosome. This is Large ribosomal subunit protein uL14 from Prochlorococcus marinus (strain MIT 9301).